Consider the following 361-residue polypeptide: Fructose-bisphosphate aldolase (361 aa).

Thr2 carries the post-translational modification N-acetylthreonine. Substrate-binding residues include Arg56 and Lys147. Glu188 (proton acceptor) is an active-site residue. Residue Lys230 is the Schiff-base intermediate with dihydroxyacetone-P of the active site.

It belongs to the class I fructose-bisphosphate aldolase family. As to quaternary structure, homotetramer. As to expression, mainly expressed in the heads and partly in the thoraxes of adult flies. Expressed in all adult tissues. The Alpha-beta mRNA shows strong expression in the abdomens of adults. In terms of tissue distribution, mainly expressed in adult abdominal regions and is also expressed in lesser amounts in other parts of the body. The Beta-gamma mRNA is expressed in adult heads.

The catalysed reaction is beta-D-fructose 1,6-bisphosphate = D-glyceraldehyde 3-phosphate + dihydroxyacetone phosphate. It functions in the pathway carbohydrate degradation; glycolysis; D-glyceraldehyde 3-phosphate and glycerone phosphate from D-glucose: step 4/4. Functionally, enzyme of the glycolytic pathway. Glycolysis is essential in glial cells but not in neurons; neurons rely on the citric acid cycle for their energy needs, and on lactate and alanine secreted into the hemolymph by glial cells to fuel it. May take part in developmental stage-specific or tissue -specific sugar-phosphate metabolisms. Protein acts on two substrates fructose 1,6-bisphosphate and fructose 1-phosphate (like other class I aldolases). This chain is Fructose-bisphosphate aldolase, found in Drosophila melanogaster (Fruit fly).